A 95-amino-acid polypeptide reads, in one-letter code: MTLKTADVEYIAHLARLAIDSEAIPHYKHDLSRILEFVGQMNKVDTTNIEPMAHPLDAIQRLRPDEVTESDQWRTFQSIAPQVEAGVYLIPKVID.

Belongs to the GatC family. In terms of assembly, heterotrimer of A, B and C subunits.

The enzyme catalyses L-glutamyl-tRNA(Gln) + L-glutamine + ATP + H2O = L-glutaminyl-tRNA(Gln) + L-glutamate + ADP + phosphate + H(+). It carries out the reaction L-aspartyl-tRNA(Asn) + L-glutamine + ATP + H2O = L-asparaginyl-tRNA(Asn) + L-glutamate + ADP + phosphate + 2 H(+). Its function is as follows. Allows the formation of correctly charged Asn-tRNA(Asn) or Gln-tRNA(Gln) through the transamidation of misacylated Asp-tRNA(Asn) or Glu-tRNA(Gln) in organisms which lack either or both of asparaginyl-tRNA or glutaminyl-tRNA synthetases. The reaction takes place in the presence of glutamine and ATP through an activated phospho-Asp-tRNA(Asn) or phospho-Glu-tRNA(Gln). The sequence is that of Aspartyl/glutamyl-tRNA(Asn/Gln) amidotransferase subunit C from Nitrosococcus oceani (strain ATCC 19707 / BCRC 17464 / JCM 30415 / NCIMB 11848 / C-107).